Here is a 520-residue protein sequence, read N- to C-terminus: Amine oxidase [flavin-containing] B (520 aa).

Position 2 is an N-acetylserine (serine 2). Topologically, residues 2–489 (SNKCDVVVVG…TFLERHLPSV (488 aa)) are cytoplasmic. Lysine 52 carries the post-translational modification N6-acetyllysine. An S-8alpha-FAD cysteine modification is found at cysteine 397. Residues 490–516 (PGLLRLIGLTTIFSATALGFLAHKRGL) form a helical; Anchor for type IV membrane protein membrane-spanning segment. Topologically, residues 517–520 (LVRV) are mitochondrial intermembrane.

In terms of assembly, monomer, homo- or heterodimer (containing two subunits of similar size). Each subunit contains a covalently bound flavin. Enzymatically active as monomer. It depends on FAD as a cofactor.

The protein localises to the mitochondrion outer membrane. The enzyme catalyses a secondary aliphatic amine + O2 + H2O = a primary amine + an aldehyde + H2O2. It carries out the reaction (R)-adrenaline + O2 + H2O = (R)-3,4-dihydroxymandelaldehyde + methylamine + H2O2. The catalysed reaction is a primary methyl amine + O2 + H2O = an aldehyde + H2O2 + NH4(+). It catalyses the reaction benzylamine + O2 + H2O = benzaldehyde + H2O2 + NH4(+). The enzyme catalyses dopamine + O2 + H2O = 3,4-dihydroxyphenylacetaldehyde + H2O2 + NH4(+). It carries out the reaction tyramine + O2 + H2O = (4-hydroxyphenyl)acetaldehyde + H2O2 + NH4(+). The catalysed reaction is (R)-noradrenaline + O2 + H2O = (R)-3,4-dihydroxymandelaldehyde + H2O2 + NH4(+). It catalyses the reaction 2-phenylethylamine + O2 + H2O = 2-phenylacetaldehyde + H2O2 + NH4(+). The enzyme catalyses N-acetylputrescine + O2 + H2O = 4-acetamidobutanal + H2O2 + NH4(+). Its activity is regulated as follows. Inhibited by deprenyl. Functionally, catalyzes the oxidative deamination of primary and some secondary amines such as neurotransmitters, and exogenous amines including the tertiary amine, neurotoxin 1-methyl-4-phenyl-1,2,3,6-tetrahydropyridine (MPTP), with concomitant reduction of oxygen to hydrogen peroxide and participates in the metabolism of neuroactive and vasoactive amines in the central nervous system and peripheral tissues. Preferentially degrades benzylamine and phenylethylamine. The sequence is that of Amine oxidase [flavin-containing] B from Homo sapiens (Human).